Here is a 286-residue protein sequence, read N- to C-terminus: Elongation factor Ts (286 aa).

An involved in Mg(2+) ion dislocation from EF-Tu region spans residues 82 to 85 (TDFV). Residues 212–286 (VAAQTGQKVE…SPSKKGKKKK (75 aa)) form a disordered region. Residues 215–227 (QTGQKVEQPQAAQ) are compositionally biased toward polar residues. Over residues 253 to 269 (ETDSPAAETTTEPPKTT) the composition is skewed to low complexity.

Belongs to the EF-Ts family.

Its subcellular location is the cytoplasm. Functionally, associates with the EF-Tu.GDP complex and induces the exchange of GDP to GTP. It remains bound to the aminoacyl-tRNA.EF-Tu.GTP complex up to the GTP hydrolysis stage on the ribosome. The protein is Elongation factor Ts of Gloeothece citriformis (strain PCC 7424) (Cyanothece sp. (strain PCC 7424)).